The primary structure comprises 675 residues: Methionine--tRNA ligase (675 aa).

Positions Pro15–His25 match the 'HIGH' region motif. Zn(2+)-binding residues include Cys146, Cys149, Cys159, and Cys162. The 'KMSKS' region signature appears at Lys332–Ser336. Residue Lys335 participates in ATP binding. Positions Asp574–Lys675 constitute a tRNA-binding domain.

This sequence belongs to the class-I aminoacyl-tRNA synthetase family. MetG type 1 subfamily. Homodimer. Requires Zn(2+) as cofactor.

The protein resides in the cytoplasm. The catalysed reaction is tRNA(Met) + L-methionine + ATP = L-methionyl-tRNA(Met) + AMP + diphosphate. Its function is as follows. Is required not only for elongation of protein synthesis but also for the initiation of all mRNA translation through initiator tRNA(fMet) aminoacylation. This chain is Methionine--tRNA ligase, found in Shewanella amazonensis (strain ATCC BAA-1098 / SB2B).